Reading from the N-terminus, the 249-residue chain is 23S rRNA (guanosine-2'-O-)-methyltransferase RlmB (249 aa).

Residues glycine 200, isoleucine 220, and leucine 229 each contribute to the S-adenosyl-L-methionine site.

This sequence belongs to the class IV-like SAM-binding methyltransferase superfamily. RNA methyltransferase TrmH family. RlmB subfamily.

It is found in the cytoplasm. The catalysed reaction is guanosine(2251) in 23S rRNA + S-adenosyl-L-methionine = 2'-O-methylguanosine(2251) in 23S rRNA + S-adenosyl-L-homocysteine + H(+). Its function is as follows. Specifically methylates the ribose of guanosine 2251 in 23S rRNA. This is 23S rRNA (guanosine-2'-O-)-methyltransferase RlmB from Xylella fastidiosa (strain 9a5c).